Reading from the N-terminus, the 248-residue chain is Probable transcriptional regulatory protein BARBAKC583_0163 (248 aa).

Belongs to the TACO1 family.

It is found in the cytoplasm. This chain is Probable transcriptional regulatory protein BARBAKC583_0163, found in Bartonella bacilliformis (strain ATCC 35685 / KC583 / Herrer 020/F12,63).